A 382-amino-acid polypeptide reads, in one-letter code: Telomere-binding protein OPG082 (382 aa).

The protein belongs to the orthopoxvirus OPG082 family.

It localises to the virion. In terms of biological role, binds to the hairpin form of the viral telomeric sequence. Might direct genome encapsidation into the virus particle. The sequence is that of Telomere-binding protein OPG082 (OPG082) from Variola virus (isolate Human/India/Ind3/1967) (VARV).